Reading from the N-terminus, the 163-residue chain is Cyclic pyranopterin monophosphate synthase (163 aa).

Substrate contacts are provided by residues 75–77 and 113–114; these read LCH and ME. Aspartate 128 is a catalytic residue.

The protein belongs to the MoaC family. Homohexamer; trimer of dimers.

The enzyme catalyses (8S)-3',8-cyclo-7,8-dihydroguanosine 5'-triphosphate = cyclic pyranopterin phosphate + diphosphate. Its pathway is cofactor biosynthesis; molybdopterin biosynthesis. Functionally, catalyzes the conversion of (8S)-3',8-cyclo-7,8-dihydroguanosine 5'-triphosphate to cyclic pyranopterin monophosphate (cPMP). This is Cyclic pyranopterin monophosphate synthase from Jannaschia sp. (strain CCS1).